Consider the following 65-residue polypeptide: Large ribosomal subunit protein bL35 (65 aa).

Belongs to the bacterial ribosomal protein bL35 family.

This Desulforapulum autotrophicum (strain ATCC 43914 / DSM 3382 / VKM B-1955 / HRM2) (Desulfobacterium autotrophicum) protein is Large ribosomal subunit protein bL35.